A 720-amino-acid chain; its full sequence is Protein arginine N-methyltransferase 7 (720 aa).

2 consecutive SAM-dependent MTase PRMT-type domains span residues 54–385 (DHHP…TSIS) and 387–720 (QLNI…TTCS). Residues Glu-180 and Glu-189 contribute to the active site.

Belongs to the class I-like SAM-binding methyltransferase superfamily. Protein arginine N-methyltransferase family. PRMT7 subfamily.

Its function is as follows. Arginine methyltransferase that can both catalyze the formation of omega-N monomethylarginine (MMA) and symmetrical dimethylarginine (sDMA). In Oryza sativa subsp. japonica (Rice), this protein is Protein arginine N-methyltransferase 7 (PRMT7).